The following is a 263-amino-acid chain: Shikimate dehydrogenase (NADP(+)) (263 aa).

Shikimate contacts are provided by residues 16–18 (SKS) and threonine 65. Lysine 69 serves as the catalytic Proton acceptor. 2 residues coordinate shikimate: asparagine 90 and aspartate 105. NADP(+)-binding positions include 125–129 (GSGGS) and leucine 208. Tyrosine 210 contributes to the shikimate binding site. NADP(+) is bound at residue glycine 230.

This sequence belongs to the shikimate dehydrogenase family. Homodimer.

It catalyses the reaction shikimate + NADP(+) = 3-dehydroshikimate + NADPH + H(+). The protein operates within metabolic intermediate biosynthesis; chorismate biosynthesis; chorismate from D-erythrose 4-phosphate and phosphoenolpyruvate: step 4/7. Functionally, involved in the biosynthesis of the chorismate, which leads to the biosynthesis of aromatic amino acids. Catalyzes the reversible NADPH linked reduction of 3-dehydroshikimate (DHSA) to yield shikimate (SA). The polypeptide is Shikimate dehydrogenase (NADP(+)) (Helicobacter acinonychis (strain Sheeba)).